Here is a 327-residue protein sequence, read N- to C-terminus: Flotillin-like protein FloA (327 aa).

The next 2 membrane-spanning stretches (helical) occupy residues 6–26 (VLFFVVIGLAIIALAVFFTFV) and 28–48 (IMLWISALAAGVRISIFTLVG).

The protein belongs to the flotillin-like FloA family. Homooligomerizes.

The protein localises to the cell membrane. It is found in the membrane raft. In terms of biological role, found in functional membrane microdomains (FMM) that may be equivalent to eukaryotic membrane rafts. FMMs are highly dynamic and increase in number as cells age. Flotillins are thought to be important factors in membrane fluidity. This Priestia megaterium (strain DSM 319 / IMG 1521) (Bacillus megaterium) protein is Flotillin-like protein FloA.